Reading from the N-terminus, the 226-residue chain is Leucyl/phenylalanyl-tRNA--protein transferase (226 aa).

The protein belongs to the L/F-transferase family.

Its subcellular location is the cytoplasm. It carries out the reaction N-terminal L-lysyl-[protein] + L-leucyl-tRNA(Leu) = N-terminal L-leucyl-L-lysyl-[protein] + tRNA(Leu) + H(+). The enzyme catalyses N-terminal L-arginyl-[protein] + L-leucyl-tRNA(Leu) = N-terminal L-leucyl-L-arginyl-[protein] + tRNA(Leu) + H(+). It catalyses the reaction L-phenylalanyl-tRNA(Phe) + an N-terminal L-alpha-aminoacyl-[protein] = an N-terminal L-phenylalanyl-L-alpha-aminoacyl-[protein] + tRNA(Phe). Its function is as follows. Functions in the N-end rule pathway of protein degradation where it conjugates Leu, Phe and, less efficiently, Met from aminoacyl-tRNAs to the N-termini of proteins containing an N-terminal arginine or lysine. This Bradyrhizobium diazoefficiens (strain JCM 10833 / BCRC 13528 / IAM 13628 / NBRC 14792 / USDA 110) protein is Leucyl/phenylalanyl-tRNA--protein transferase.